The chain runs to 345 residues: Beta-2-glycoprotein 1 (345 aa).

A signal peptide spans 1 to 19; the sequence is MPPPALVLLLGFLCHVAIA. Sushi domains follow at residues 21–81, 82–139, 140–202, and 203–262; these read RTCP…KCMP, RVCP…VCAP, ITCP…ECRE, and VRCP…SCKA. 11 disulfides stabilise this stretch: Cys23/Cys66, Cys51/Cys79, Cys84/Cys124, Cys110/Cys137, Cys142/Cys188, Cys174/Cys200, Cys205/Cys248, Cys234/Cys260, Cys264/Cys315, Cys300/Cys325, and Cys307/Cys345. An O-linked (GalNAc...) threonine glycan is attached at Thr33. Residue Asn92 is glycosylated (N-linked (GlcNAc...) asparagine). N-linked (GlcNAc...) asparagine glycans are attached at residues Asn162, Asn183, and Asn193. N-linked (GlcNAc...) asparagine glycosylation occurs at Asn253. Residues 263–345 are sushi-like; it reads SCKLSIKRAT…KTDASDVKPC (83 aa).

In terms of tissue distribution, expressed by the liver and secreted in plasma.

It localises to the secreted. Functionally, binds to various kinds of negatively charged substances such as heparin, phospholipids, and dextran sulfate. May prevent activation of the intrinsic blood coagulation cascade by binding to phospholipids on the surface of damaged cells. The protein is Beta-2-glycoprotein 1 (APOH) of Bos taurus (Bovine).